A 230-amino-acid polypeptide reads, in one-letter code: Cytochrome c oxidase subunit 2 (230 aa).

Residues Met1–Ser14 lie on the Mitochondrial intermembrane side of the membrane. A helical membrane pass occupies residues Pro15 to Met45. Residues Val46–Gln59 are Mitochondrial matrix-facing. The helical transmembrane segment at Glu60–Met87 threads the bilayer. Topologically, residues Asp88–Ala230 are mitochondrial intermembrane. 6 residues coordinate Cu cation: His161, Cys196, Glu198, Cys200, His204, and Met207. Residue Glu198 participates in Mg(2+) binding.

Belongs to the cytochrome c oxidase subunit 2 family. Component of the cytochrome c oxidase (complex IV, CIV), a multisubunit enzyme composed of 14 subunits. The complex is composed of a catalytic core of 3 subunits MT-CO1, MT-CO2 and MT-CO3, encoded in the mitochondrial DNA, and 11 supernumerary subunits COX4I, COX5A, COX5B, COX6A, COX6B, COX6C, COX7A, COX7B, COX7C, COX8 and NDUFA4, which are encoded in the nuclear genome. The complex exists as a monomer or a dimer and forms supercomplexes (SCs) in the inner mitochondrial membrane with NADH-ubiquinone oxidoreductase (complex I, CI) and ubiquinol-cytochrome c oxidoreductase (cytochrome b-c1 complex, complex III, CIII), resulting in different assemblies (supercomplex SCI(1)III(2)IV(1) and megacomplex MCI(2)III(2)IV(2)). Found in a complex with TMEM177, COA6, COX18, COX20, SCO1 and SCO2. Interacts with TMEM177 in a COX20-dependent manner. Interacts with COX20. Interacts with COX16. Cu cation serves as cofactor.

The protein localises to the mitochondrion inner membrane. It catalyses the reaction 4 Fe(II)-[cytochrome c] + O2 + 8 H(+)(in) = 4 Fe(III)-[cytochrome c] + 2 H2O + 4 H(+)(out). Functionally, component of the cytochrome c oxidase, the last enzyme in the mitochondrial electron transport chain which drives oxidative phosphorylation. The respiratory chain contains 3 multisubunit complexes succinate dehydrogenase (complex II, CII), ubiquinol-cytochrome c oxidoreductase (cytochrome b-c1 complex, complex III, CIII) and cytochrome c oxidase (complex IV, CIV), that cooperate to transfer electrons derived from NADH and succinate to molecular oxygen, creating an electrochemical gradient over the inner membrane that drives transmembrane transport and the ATP synthase. Cytochrome c oxidase is the component of the respiratory chain that catalyzes the reduction of oxygen to water. Electrons originating from reduced cytochrome c in the intermembrane space (IMS) are transferred via the dinuclear copper A center (CU(A)) of subunit 2 and heme A of subunit 1 to the active site in subunit 1, a binuclear center (BNC) formed by heme A3 and copper B (CU(B)). The BNC reduces molecular oxygen to 2 water molecules using 4 electrons from cytochrome c in the IMS and 4 protons from the mitochondrial matrix. The protein is Cytochrome c oxidase subunit 2 (mt-co2) of Danio rerio (Zebrafish).